Consider the following 96-residue polypeptide: Protein RnfH (96 aa).

It belongs to the UPF0125 (RnfH) family.

The chain is Protein RnfH from Escherichia fergusonii (strain ATCC 35469 / DSM 13698 / CCUG 18766 / IAM 14443 / JCM 21226 / LMG 7866 / NBRC 102419 / NCTC 12128 / CDC 0568-73).